We begin with the raw amino-acid sequence, 464 residues long: Type I restriction enzyme EcoKI specificity subunit (464 aa).

Belongs to the type-I restriction system S methylase family. As to quaternary structure, the type I restriction/modification system is composed of three polypeptides R, M and S. The restriction enzyme has stoichiometry R(2)M(2)S(1). The methyltransferase is composed of M(2)S(1). (Microbial infection) Interacts with Escherichia phage T7 protein Ocr; this interaction leads to the inhibition of the methyltransferase restriction enzyme M.EcoKI composed of M(2)S(1).

In terms of biological role, the specificity (S) subunit of a type I restriction enzyme; this subunit dictates DNA sequence specificity. The M and S subunits together form a methyltransferase (MTase) that methylates A-2 on the top and A-3 on the bottom strand of the sequence 5'-AACN(6)GTGC-3'. In the presence of the R subunit the complex can also act as an endonuclease, binding to the same target sequence but cutting the DNA some distance from this site. Whether the DNA is cut or modified depends on the methylation state of the target sequence. When the target site is unmodified, the DNA is cut. When the target site is hemimethylated, the complex acts as a maintenance MTase modifying the DNA so that both strands become methylated. After locating a non-methylated recognition site, the enzyme complex serves as a molecular motor that translocates DNA in an ATP-dependent manner until a collision occurs that triggers cleavage. The protein is Type I restriction enzyme EcoKI specificity subunit of Escherichia coli (strain K12).